The following is a 40-amino-acid chain: Photosystem II reaction center protein J (40 aa).

The chain crosses the membrane as a helical span at residues 8-28 (IPLWLVGTVTGIPVIGLIGVF).

It belongs to the PsbJ family. PSII is composed of 1 copy each of membrane proteins PsbA, PsbB, PsbC, PsbD, PsbE, PsbF, PsbH, PsbI, PsbJ, PsbK, PsbL, PsbM, PsbT, PsbX, PsbY, PsbZ, Psb30/Ycf12, at least 3 peripheral proteins of the oxygen-evolving complex and a large number of cofactors. It forms dimeric complexes.

It localises to the plastid. It is found in the chloroplast thylakoid membrane. Its function is as follows. One of the components of the core complex of photosystem II (PSII). PSII is a light-driven water:plastoquinone oxidoreductase that uses light energy to abstract electrons from H(2)O, generating O(2) and a proton gradient subsequently used for ATP formation. It consists of a core antenna complex that captures photons, and an electron transfer chain that converts photonic excitation into a charge separation. This Musa acuminata (Banana) protein is Photosystem II reaction center protein J.